Here is a 481-residue protein sequence, read N- to C-terminus: Ankyrin repeat, SAM and basic leucine zipper domain-containing protein 1 (481 aa).

The segment covering 1 to 10 (MASGALRGLA) has biased composition (low complexity). Residues 1–23 (MASGALRGLAVAGGGESSDSEDD) form a disordered region. A phosphoserine mark is found at Ser17, Ser18, and Ser20. ANK repeat units follow at residues 45 to 74 (EKSE…SVDS), 78 to 107 (YGWT…NASF), 110 to 144 (DKQT…DPNI), 148 to 177 (RLMT…EVNA), 181 to 210 (NGYT…NKML), and 214 to 243 (DGKI…PLEG). The SAM domain occupies 272 to 334 (SYTAFGDLEI…KILSALKELE (63 aa)).

Interacts with DDX4, PIWIL1, RANBP9 and TDRD1.

Its subcellular location is the cytoplasm. Plays a central role during spermatogenesis by repressing transposable elements and preventing their mobilization, which is essential for the germline integrity. Acts via the piRNA metabolic process, which mediates the repression of transposable elements during meiosis by forming complexes composed of piRNAs and Piwi proteins and governs the methylation and subsequent repression of transposons. Its association with pi-bodies suggests a participation in the primary piRNAs metabolic process. Required prior to the pachytene stage to facilitate the production of multiple types of piRNAs, including those associated with repeats involved in the regulation of retrotransposons. May act by mediating protein-protein interactions during germ cell maturation. The polypeptide is Ankyrin repeat, SAM and basic leucine zipper domain-containing protein 1 (ASZ1) (Eulemur macaco macaco (Black lemur)).